Here is a 209-residue protein sequence, read N- to C-terminus: High-affinity nitrate transporter 3.2 (209 aa).

The N-terminal stretch at 1–22 is a signal peptide; sequence MAIHTLLFVSLLIFSLIESSSG. Residues 177–197 form a helical membrane-spanning segment; sequence LDIASTFFSVFSVVSLFVFFV.

This sequence belongs to the NAR2 family. Bearly detected in roots and shoots.

Its subcellular location is the cell membrane. Acts as a dual component transporter with NTR2.1. Required for high-affinity nitrate transport. This chain is High-affinity nitrate transporter 3.2, found in Arabidopsis thaliana (Mouse-ear cress).